Consider the following 190-residue polypeptide: 7-methyl-GTP pyrophosphatase (190 aa).

The active-site Proton acceptor is D69.

The protein belongs to the Maf family. YceF subfamily. The cofactor is a divalent metal cation.

The protein localises to the cytoplasm. It carries out the reaction N(7)-methyl-GTP + H2O = N(7)-methyl-GMP + diphosphate + H(+). Its function is as follows. Nucleoside triphosphate pyrophosphatase that hydrolyzes 7-methyl-GTP (m(7)GTP). May have a dual role in cell division arrest and in preventing the incorporation of modified nucleotides into cellular nucleic acids. This is 7-methyl-GTP pyrophosphatase from Xanthomonas axonopodis pv. citri (strain 306).